The chain runs to 342 residues: MKKRIAIVLFNLGGPKNLKSVKPFLFNLFYDKAIINLPNPLRYIIAKIISITREKKSQKIYSLIGGKSSLLQETEEQKLALTEKLKQLIKEDFAIFINMRYSAPFAKEVIGQIKKYNPSEIILLPLYSQFSSTTTGSSVKNFLQNLDIDIPIKTICCYPLEKDFIKAHVSLIKEKLYDKNFRILFSAHGLPEKIIKAGDPYSFQIKETVQAIVKELNIKDLDYKITYQSRVGPIEWLKPNTEDEIELAGKLKKDIIIVPISFVSEHVETLVELDIEYKLIADKYEIQYIRIPTLGTNKIFINSLTNILLRFINKVDTNLVMSSSSTRICPNEFTKCLCKLTS.

Residues histidine 188 and glutamate 268 each contribute to the Fe cation site.

Belongs to the ferrochelatase family.

The protein localises to the cytoplasm. It carries out the reaction heme b + 2 H(+) = protoporphyrin IX + Fe(2+). It participates in porphyrin-containing compound metabolism; protoheme biosynthesis; protoheme from protoporphyrin-IX: step 1/1. In terms of biological role, catalyzes the ferrous insertion into protoporphyrin IX. The sequence is that of Ferrochelatase from Rickettsia conorii (strain ATCC VR-613 / Malish 7).